The sequence spans 261 residues: MIHSKKLTLGICLVLLIILIGGCVIMTKTNGRNAQIKENFNKTLSVYPTKNLDDFYDKEGFRDQEFDKRDKGTWIIYSEMVIEPKGKNMESRGMVLYINRNTRTTKGNFIVTEITEDSKGYSRSKEKKYPVKMENNRIIPTKPIPDDKLKKEIENFKFFVQYGNFKDFKDYKNGDISYNPNVPSYSAKYQLNNDDYNVQQLRKRYHIPTKQAPELKLKGSGNLKGSSVGSKDLEFTFVENQEENIYFSDSVEFTPSEDDKS.

The N-terminal stretch at methionine 1 to glycine 22 is a signal peptide. The N-palmitoyl cysteine moiety is linked to residue cysteine 23. Cysteine 23 is lipidated: S-diacylglycerol cysteine.

The protein belongs to the staphylococcal tandem lipoprotein family.

It localises to the cell membrane. This is an uncharacterized protein from Staphylococcus aureus (strain USA300).